Reading from the N-terminus, the 166-residue chain is Myosin regulatory light chain 2, ventricular/cardiac muscle isoform (166 aa).

A N,N,N-trimethylalanine modification is found at Ala2. Asn14 is modified (deamidated asparagine). At Ser15 the chain carries Phosphoserine; by ZIPK/DAPK3. Ser19 carries the post-translational modification Phosphoserine. EF-hand domains follow at residues Thr24–Val59, Asp94–Arg129, and Phe130–Lys165. Asp37, Asn39, Asp41, and Asp48 together coordinate Ca(2+). At Thr52 the chain carries Phosphothreonine.

In terms of assembly, myosin is a hexamer of 2 heavy chains and 4 light chains. Interacts with MYOC. N-terminus is methylated by METTL11A/NTM1. In terms of processing, phosphorylated by MYLK3 and MYLK2; promotes cardiac muscle contraction and function. Dephosphorylated by PPP1CB complexed to PPP1R12B. The phosphorylated form in adult is expressed as gradients across the heart from endocardium (low phosphorylation) to epicardium (high phosphorylation); regulates cardiac torsion and workload distribution. In terms of tissue distribution, highly expressed in type I muscle fibers.

The protein resides in the cytoplasm. The protein localises to the myofibril. It localises to the sarcomere. It is found in the a band. Its function is as follows. Contractile protein that plays a role in heart development and function. Following phosphorylation, plays a role in cross-bridge cycling kinetics and cardiac muscle contraction by increasing myosin lever arm stiffness and promoting myosin head diffusion; as a consequence of the increase in maximum contraction force and calcium sensitivity of contraction force. These events altogether slow down myosin kinetics and prolong duty cycle resulting in accumulated myosins being cooperatively recruited to actin binding sites to sustain thin filament activation as a means to fine-tune myofilament calcium sensitivity to force. During cardiogenesis plays an early role in cardiac contractility by promoting cardiac myofibril assembly. The polypeptide is Myosin regulatory light chain 2, ventricular/cardiac muscle isoform (Homo sapiens (Human)).